The primary structure comprises 1017 residues: MVFSVRQCGHVGRTEEVLLTFKIFLVIICLHVVLVTSLEEDTDNSSLSPPPAKLSVVSFAPSSNGTPEVETTSLNDVTLSLLPSNETEKTKITIVKTFNASGVKPQRNICNLSSICNDSAFFRGEIMFQYDKESTVPQNQHITNGTLTGVLSLSELKRSELNKTLQTLSETYFIMCATAEAQSTLNCTFTIKLNNTMNACAVIAALERVKIRPMEHCCCSVRIPCPSSPEELEKLQCDLQDPIVCLADHPRGPPFSSSQSIPVVPRATVLSQVPKATSFAEPPDYSPVTHNVPSPIGEIQPLSPQPSAPIASSPAIDMPPQSETISSPMPQTHVSGTPPPVKASFSSPTVSAPANVNTTSAPPVQTDIVNTSSISDLENQVLQMEKALSLGSLEPNLAGEMINQVSRLLHSPPDMLAPLAQRLLKVVDDIGLQLNFSNTTISLTSPSLALAVIRVNASSFNTTTFVAQDPANLQVSLETQAPENSIGTITLPSSLMNNLPAHDMELASRVQFNFFETPALFQDPSLENLSLISYVISSSVANLTVRNLTRNVTVTLKHINPSQDELTVRCVFWDLGRNGGRGGWSDNGCSVKDRRLNETICTCSHLTSFGVLLDLSRTSVLPAQMMALTFITYIGCGLSSIFLSVTLVTYIAFEKIRRDYPSKILIQLCAALLLLNLVFLLDSWIALYKMQGLCISVAVFLHYFLLVSFTWMGLEAFHMYLALVKVFNTYIRKYILKFCIVGWGVPAVVVTIILTISPDNYGLGSYGKFPNGSPDDFCWINNNAVFYITVVGYFCVIFLLNVSMFIVVLVQLCRIKKKKQLGAQRKTSIQDLRSIAGLTFLLGITWGFAFFAWGPVNVTFMYLFAIFNTLQGFFIFIFYCVAKENVRKQWRRYLCCGKLRLAENSDWSKTATNGLKKQTVNQGVSSSSNSLQSSSNSTNSTTLLVNNDCSVHASGNGNASTERNGVSFSVQNGDVCLHDFTGKQHMFNEKEDSCNGKGRMALRRTSKRGSLHFIEQM.

Residues 1–37 (MVFSVRQCGHVGRTEEVLLTFKIFLVIICLHVVLVTS) form the signal peptide. The Extracellular portion of the chain corresponds to 38 to 627 (LEEDTDNSSL…TSVLPAQMMA (590 aa)). Asn-44, Asn-85, Asn-99, Asn-111, Asn-117, Asn-144, Asn-162, Asn-186, and Asn-194 each carry an N-linked (GlcNAc...) asparagine glycan. The segment at 301–366 (PLSPQPSAPI…NTTSAPPVQT (66 aa)) is disordered. Over residues 308-320 (APIASSPAIDMPP) the composition is skewed to low complexity. Composition is skewed to polar residues over residues 321–335 (QSETISSPMPQTHVS) and 344–366 (SFSSPTVSAPANVNTTSAPPVQT). Residues Asn-357, Asn-370, Asn-435, Asn-438, Asn-456, Asn-461, Asn-528, Asn-542, Asn-547, Asn-551, and Asn-597 are each glycosylated (N-linked (GlcNAc...) asparagine). The 158-residue stretch at 462-619 (TTTFVAQDPA…GVLLDLSRTS (158 aa)) folds into the GAIN-B domain. Intrachain disulfides connect Cys-570-Cys-601 and Cys-589-Cys-603. Positions 570–619 (CVFWDLGRNGGRGGWSDNGCSVKDRRLNETICTCSHLTSFGVLLDLSRTS) are GPS. Residues 608-619 (SFGVLLDLSRTS) form a stachel region. A helical membrane pass occupies residues 628–648 (LTFITYIGCGLSSIFLSVTLV). The Cytoplasmic portion of the chain corresponds to 649-667 (TYIAFEKIRRDYPSKILIQ). The chain crosses the membrane as a helical span at residues 668–688 (LCAALLLLNLVFLLDSWIALY). Over 689–693 (KMQGL) the chain is Extracellular. The chain crosses the membrane as a helical span at residues 694-714 (CISVAVFLHYFLLVSFTWMGL). Cys-694 and Cys-778 are oxidised to a cystine. Residues 715-737 (EAFHMYLALVKVFNTYIRKYILK) lie on the Cytoplasmic side of the membrane. Residues 738–758 (FCIVGWGVPAVVVTIILTISP) traverse the membrane as a helical segment. The Extracellular segment spans residues 759 to 789 (DNYGLGSYGKFPNGSPDDFCWINNNAVFYIT). A helical transmembrane segment spans residues 790 to 810 (VVGYFCVIFLLNVSMFIVVLV). At 811-834 (QLCRIKKKKQLGAQRKTSIQDLRS) the chain is on the cytoplasmic side. Residues 835–855 (IAGLTFLLGITWGFAFFAWGP) form a helical membrane-spanning segment. Over 856-857 (VN) the chain is Extracellular. Residue Asn-857 is glycosylated (N-linked (GlcNAc...) asparagine). A helical membrane pass occupies residues 858–878 (VTFMYLFAIFNTLQGFFIFIF). Residue Asn-868 coordinates 3beta-hydroxyandrost-5-en-17-one. Over 879 to 1017 (YCVAKENVRK…RGSLHFIEQM (139 aa)) the chain is Cytoplasmic. The disordered stretch occupies residues 918-939 (QTVNQGVSSSSNSLQSSSNSTN). Phosphoserine is present on Ser-1010.

Belongs to the G-protein coupled receptor 2 family. Adhesion G-protein coupled receptor (ADGR) subfamily. In terms of assembly, heterodimer of 2 chains generated by proteolytic processing; the large extracellular N-terminal fragment and the membrane-bound C-terminal fragment predominantly remain associated and non-covalently linked. Interacts with CFTR. Proteolytically cleaved into 2 subunits, an extracellular subunit and a seven-transmembrane subunit. Post-translationally, highly glycosylated. As to expression, epididymis-specific expression (at protein level). Both subunits are associated with apical membranes of efferent ductule and proximal epididymal duct epithelia. Mainly expressed in the nonciliated principal cells of the proximal excurrent ducts. Specifically over-expressed in Ewing sarcomas but also up-regulated in a number of carcinomas derived from prostate, kidney or lung.

The protein resides in the apical cell membrane. Its activity is regulated as follows. Forms a heterodimer of 2 chains generated by proteolytic processing that remain associated through non-covalent interactions mediated by the GAIN-B domain. In the inactivated receptor, the Stachel sequence (also named stalk) is embedded in the GAIN-B domain, where it adopts a beta-strand conformation. On activation, the Stachel moves into the 7 transmembrane region and adopts a twisted hook-shaped configuration that forms contacts within the receptor, leading to coupling of a G-alpha protein, which activates signaling. The cleaved GAIN-B and N-terminal domains can then dissociate from the rest of the receptor. Deoxycorticosterone (DOC) acts as an antagonist of ADGRG2. Adhesion G-protein coupled receptor (aGPCR) for steroid hormones, such as dehydroepiandrosterone (DHEA; also named 3beta-hydroxyandrost-5-en-17-one) and androstenedione. Involved in a signal transduction pathway controlling epididymal function and male fertility. Ligand binding causes a conformation change that triggers signaling via guanine nucleotide-binding proteins (G proteins) and modulates the activity of downstream effectors, such as adenylate cyclase. ADGRG2 is coupled to G(s) G proteins and mediates activation of adenylate cyclase activity. Also able to couple with G(q) G proteins in vitro. Together with CFTR, required to promote fluid reabsorption within efferent ductule. This is Adhesion G-protein coupled receptor G2 from Homo sapiens (Human).